The following is a 753-amino-acid chain: 5-methyltetrahydropteroyltriglutamate--homocysteine methyltransferase (753 aa).

5-methyltetrahydropteroyltri-L-glutamate-binding positions include 17–20 (RELK) and Lys-117. L-homocysteine-binding positions include 431–433 (IGS) and Glu-484. Residues 431 to 433 (IGS) and Glu-484 each bind L-methionine. 5-methyltetrahydropteroyltri-L-glutamate-binding positions include 515–516 (RC) and Trp-561. L-homocysteine is bound at residue Asp-599. Asp-599 contributes to the L-methionine binding site. Glu-605 contacts 5-methyltetrahydropteroyltri-L-glutamate. Zn(2+)-binding residues include His-641, Cys-643, and Glu-665. Residue His-694 is the Proton donor of the active site. Cys-726 contacts Zn(2+).

It belongs to the vitamin-B12 independent methionine synthase family. Requires Zn(2+) as cofactor.

It carries out the reaction 5-methyltetrahydropteroyltri-L-glutamate + L-homocysteine = tetrahydropteroyltri-L-glutamate + L-methionine. It participates in amino-acid biosynthesis; L-methionine biosynthesis via de novo pathway; L-methionine from L-homocysteine (MetE route): step 1/1. Functionally, catalyzes the transfer of a methyl group from 5-methyltetrahydrofolate to homocysteine resulting in methionine formation. The protein is 5-methyltetrahydropteroyltriglutamate--homocysteine methyltransferase of Cronobacter sakazakii (strain ATCC BAA-894) (Enterobacter sakazakii).